The chain runs to 379 residues: Cytochrome b (379 aa).

A run of 4 helical transmembrane segments spans residues 33–53 (FGSL…FLAM), 77–98 (WTIR…FIHV), 113–133 (WNIG…GYVL), and 178–198 (FFAL…IHLL). Heme b is bound by residues His83 and His97. Heme b-binding residues include His182 and His196. A ubiquinone is bound at residue His201. 4 helical membrane passes run 226–246 (TKDF…TLFY), 288–308 (LGGV…PFLQ), 320–340 (LSQF…WIGG), and 347–367 (FISI…FIMP).

The protein belongs to the cytochrome b family. As to quaternary structure, the cytochrome bc1 complex contains 11 subunits: 3 respiratory subunits (MT-CYB, CYC1 and UQCRFS1), 2 core proteins (UQCRC1 and UQCRC2) and 6 low-molecular weight proteins (UQCRH/QCR6, UQCRB/QCR7, UQCRQ/QCR8, UQCR10/QCR9, UQCR11/QCR10 and a cleavage product of UQCRFS1). This cytochrome bc1 complex then forms a dimer. The cofactor is heme b.

It localises to the mitochondrion inner membrane. In terms of biological role, component of the ubiquinol-cytochrome c reductase complex (complex III or cytochrome b-c1 complex) that is part of the mitochondrial respiratory chain. The b-c1 complex mediates electron transfer from ubiquinol to cytochrome c. Contributes to the generation of a proton gradient across the mitochondrial membrane that is then used for ATP synthesis. This Lepilemur randrianasoloi (Randrianasoli's sportive lemur) protein is Cytochrome b (MT-CYB).